Reading from the N-terminus, the 312-residue chain is MTRPIILDCDPGHDDAIAIILALSSDAFSPLAVTTSAGNQTPDKTLNNALRILTLLGRSDIPVAGGAVKPLARELIIADNVHGETGLDGPVLPDPSFAPQAMTAVELMALKIKQSQAPVTLVPTGPLTNIALLLATHPELHSNIEQIVLMGGAAGVGNWTPAAEFNIFVDPEAADMVFKAGIPITMCGLDVTHQAQVMDEDIARIRAIENPIAQCVADLLDFFILYHRDPKWGFTGAPLHDPCTIAWLLKPELFTAQQAWVGIETKGEHTQGMTVVDRYGLTGNQANATVLFDIDRAGFIDLLAQSLETYSR.

The active site involves His240.

It belongs to the IUNH family. RihA subfamily.

Its function is as follows. Hydrolyzes cytidine or uridine to ribose and cytosine or uracil, respectively. This is Pyrimidine-specific ribonucleoside hydrolase RihA from Shewanella woodyi (strain ATCC 51908 / MS32).